A 613-amino-acid polypeptide reads, in one-letter code: Vitamin B12 transporter BtuB (613 aa).

Residues Met1–Ala22 form the signal peptide. The TonB box motif lies at Asp29 to Asn36. One can recognise a TBDR plug domain in the interval Val41–Ile154. One can recognise a TBDR beta-barrel domain in the interval Gln159–Phe613. Residues His591–Phe613 carry the TonB C-terminal box motif.

The protein belongs to the TonB-dependent receptor family. BtuB (TC 1.B.14.3.1) subfamily.

The protein localises to the cell outer membrane. In terms of biological role, involved in the active translocation of vitamin B12 (cyanocobalamin) across the outer membrane to the periplasmic space. It derives its energy for transport by interacting with the trans-periplasmic membrane protein TonB. This chain is Vitamin B12 transporter BtuB, found in Vibrio vulnificus (strain YJ016).